The primary structure comprises 429 residues: Argininosuccinate lyase (429 aa).

It belongs to the lyase 1 family. Argininosuccinate lyase subfamily.

The protein localises to the cytoplasm. It carries out the reaction 2-(N(omega)-L-arginino)succinate = fumarate + L-arginine. The protein operates within amino-acid biosynthesis; L-arginine biosynthesis; L-arginine from L-ornithine and carbamoyl phosphate: step 3/3. The protein is Argininosuccinate lyase of Pyrobaculum calidifontis (strain DSM 21063 / JCM 11548 / VA1).